A 280-amino-acid chain; its full sequence is Gem-associated protein 2 (280 aa).

A may play a minor inhibitory role in snRNA binding to 5Sm (SNRPD1, SNRPD2, SNRPE, SNRPF and SNRPG) during snRNP assembly by inserting into the RNA binding pocket of 5Sm region spans residues 1–39 (MRRAELAGLKTMAWVPAESAVEELMPRLLPVEPCDLTEG). 2 positions are modified to phosphoserine: S81 and S166.

Belongs to the gemin-2 family. In terms of assembly, monomer. Part of the core SMN complex that contains SMN1, GEMIN2/SIP1, DDX20/GEMIN3, GEMIN4, GEMIN5, GEMIN6, GEMIN7, GEMIN8 and STRAP/UNRIP. Part of the SMN-Sm complex that contains SMN1, GEMIN2/SIP1, DDX20/GEMIN3, GEMIN4, GEMIN5, GEMIN6, GEMIN7, GEMIN8, STRAP/UNRIP and the Sm proteins SNRPB, SNRPD1, SNRPD2, SNRPD3, SNRPE, SNRPF and SNRPG. Interacts with GEMIN5; the interaction is direct. Interacts (via C-terminus) with SMN1; the interaction is direct. Interacts with SNRPD1; the interaction is direct. Interacts with SNRPD2; the interaction is direct. Interacts (via N-terminus) with SNRPF; the interaction is direct. Interacts (via N-terminus) with SNRPE; the interaction is direct. Interacts (via N-terminus) with SNRPG; the interaction is direct.

It localises to the nucleus. The protein resides in the gem. It is found in the cytoplasm. In terms of biological role, the SMN complex catalyzes the assembly of small nuclear ribonucleoproteins (snRNPs), the building blocks of the spliceosome, and thereby plays an important role in the splicing of cellular pre-mRNAs. Most spliceosomal snRNPs contain a common set of Sm proteins SNRPB, SNRPD1, SNRPD2, SNRPD3, SNRPE, SNRPF and SNRPG that assemble in a heptameric protein ring on the Sm site of the small nuclear RNA to form the core snRNP (Sm core). In the cytosol, the Sm proteins SNRPD1, SNRPD2, SNRPE, SNRPF and SNRPG (5Sm) are trapped in an inactive 6S pICln-Sm complex by the chaperone CLNS1A that controls the assembly of the core snRNP. To assemble core snRNPs, the SMN complex accepts the trapped 5Sm proteins from CLNS1A. Binding of snRNA inside 5Sm ultimately triggers eviction of the SMN complex, thereby allowing binding of SNRPD3 and SNRPB to complete assembly of the core snRNP. Within the SMN complex, GEMIN2 constrains the conformation of 5Sm, thereby promoting 5Sm binding to snRNA containing the snRNP code (a nonameric Sm site and a 3'-adjacent stem-loop), thus preventing progression of assembly until a cognate substrate is bound. This is Gem-associated protein 2 from Homo sapiens (Human).